The primary structure comprises 607 residues: UvrABC system protein C (607 aa).

In terms of domain architecture, GIY-YIG spans 15–92 (SQPGSYQMKD…IKRYRPYFNI (78 aa)). The UVR domain occupies 197–232 (GKAISDIKKKMKRASDSTEYELAADFRDRLKFIDQT).

It belongs to the UvrC family. As to quaternary structure, interacts with UvrB in an incision complex.

Its subcellular location is the cytoplasm. Its function is as follows. The UvrABC repair system catalyzes the recognition and processing of DNA lesions. UvrC both incises the 5' and 3' sides of the lesion. The N-terminal half is responsible for the 3' incision and the C-terminal half is responsible for the 5' incision. The protein is UvrABC system protein C of Oenococcus oeni (strain ATCC BAA-331 / PSU-1).